The primary structure comprises 600 residues: UvrABC system protein C (600 aa).

Residues Asn-15–Ile-100 form the GIY-YIG domain. A UVR domain is found at Ser-203–Leu-238.

It belongs to the UvrC family. In terms of assembly, interacts with UvrB in an incision complex.

The protein localises to the cytoplasm. Its function is as follows. The UvrABC repair system catalyzes the recognition and processing of DNA lesions. UvrC both incises the 5' and 3' sides of the lesion. The N-terminal half is responsible for the 3' incision and the C-terminal half is responsible for the 5' incision. In Campylobacter jejuni (strain RM1221), this protein is UvrABC system protein C.